Consider the following 359-residue polypeptide: UPF0284 protein MTH_1426 (359 aa).

This sequence belongs to the UPF0284 family.

The sequence is that of UPF0284 protein MTH_1426 from Methanothermobacter thermautotrophicus (strain ATCC 29096 / DSM 1053 / JCM 10044 / NBRC 100330 / Delta H) (Methanobacterium thermoautotrophicum).